Consider the following 125-residue polypeptide: Glutamyl-tRNA(Gln) amidotransferase subunit C, mitochondrial (125 aa).

It belongs to the GatC family. In terms of assembly, subunit of the heterotrimeric GatCAB amidotransferase (AdT) complex, composed of A, B and C subunits.

The protein localises to the mitochondrion. It carries out the reaction L-glutamyl-tRNA(Gln) + L-glutamine + ATP + H2O = L-glutaminyl-tRNA(Gln) + L-glutamate + ADP + phosphate + H(+). Its function is as follows. Allows the formation of correctly charged Gln-tRNA(Gln) through the transamidation of misacylated Glu-tRNA(Gln) in the mitochondria. The reaction takes place in the presence of glutamine and ATP through an activated gamma-phospho-Glu-tRNA(Gln). This chain is Glutamyl-tRNA(Gln) amidotransferase subunit C, mitochondrial, found in Drosophila mojavensis (Fruit fly).